The sequence spans 473 residues: MIDSGHLRLHDTVAGAVRDFVPLRAGHVSIYLCGATVQGQPHIGHVRSGVAFDILRRWLMARGYDVAFIRNVTDIDDKILNKAAAAGRPWWEWAATHERAFTAAYDALDVLPPSAEPRATGHITQMIELIELLIETGHAYTGGSDVYFDVLSYPDYGQLSGHKMDYIHQGEGVTTGKRDQRDFTLWKGAKSGEPSWPTPWGRGRPGWHLECSAMARAYLGSEFDIHCGGMDLVFPHHENEIAQSRAVGDGFARYWLHNGWVTMGGEKMSKSLGNVLSIPAVLQRVRPAELRYYLGSAHYRSMLEFSEAALQDAVKAYVGVENFLTRVRTRVGAVGTGELTPRFAAALDDDLAVPIALAEVHHARVEGNRALDIGDHEGALTNAGAIRAMMGILGCDPLDERWESRDETSAALAAVDVLVAAELESRQMAREQRNWVLADQIRDRLKDAGIEVTDTVNGPQWELLAGDKQVDAR.

Position 33 (Cys33) interacts with Zn(2+). The short motif at 35–45 is the 'HIGH' region element; that stretch reads ATVQGQPHIGH. The Zn(2+) site is built by Cys211, His236, and Glu240. The 'KMSKS' region motif lies at 267–271; the sequence is KMSKS. Lys270 is a binding site for ATP.

This sequence belongs to the class-I aminoacyl-tRNA synthetase family. As to quaternary structure, monomer. Requires Zn(2+) as cofactor.

Its subcellular location is the cytoplasm. The catalysed reaction is tRNA(Cys) + L-cysteine + ATP = L-cysteinyl-tRNA(Cys) + AMP + diphosphate. This is Cysteine--tRNA ligase from Mycobacterium leprae (strain Br4923).